Consider the following 616-residue polypeptide: Electron transfer flavoprotein-ubiquinone oxidoreductase, mitochondrial (616 aa).

Residues 1–32 (MLVRLTKLSCPAYQWFHALKIKKCLPLCAPRC) constitute a mitochondrion transit peptide. 70-84 (VVIVGAGPAGLSAAI) lines the FAD pocket. N6-acetyllysine is present on K95. The stretch at 108–129 (IGAHTLSGACLDPAAFKELFPD) is an intramembrane region. Residues K131 and K222 each carry the N6-acetyllysine modification. A ubiquinone is bound by residues G304 and G305. K356 and K415 each carry N6-acetyllysine. Residues 427-446 (AGLHVTEYEDNLKQSWVWKE) lie within the membrane without spanning it. S550 carries the post-translational modification Phosphoserine. Residues C560, C585, C588, and C591 each contribute to the [4Fe-4S] cluster site. The region spanning 576–605 (FRLQINAQNCVHCKTCDIKDPSQNINWVVP) is the 4Fe-4S ferredoxin-type domain.

The protein belongs to the ETF-QO/FixC family. Monomer. [4Fe-4S] cluster serves as cofactor. FAD is required as a cofactor.

It localises to the mitochondrion inner membrane. It carries out the reaction a ubiquinone + reduced [electron-transfer flavoprotein] = a ubiquinol + oxidized [electron-transfer flavoprotein] + H(+). Its function is as follows. Accepts electrons from ETF and reduces ubiquinone. This Rattus norvegicus (Rat) protein is Electron transfer flavoprotein-ubiquinone oxidoreductase, mitochondrial (Etfdh).